The following is a 361-amino-acid chain: Tryptophan--tRNA ligase, mitochondrial (361 aa).

A mitochondrion-targeting transit peptide spans 1-16; it reads MAKLPKITSLLPHSRV. ATP contacts are provided by residues Gln-21 and 27 to 30; that span reads HIGN. The short motif at 22–30 is the 'HIGH' region element; that stretch reads PTGIPHIGN. Asp-165 provides a ligand contact to L-tryptophan. ATP is bound by residues 177–179, 225–229, and Lys-228; these read GKD and KMSKS. The short motif at 225-229 is the 'KMSKS' region element; the sequence is KMSKS.

It belongs to the class-I aminoacyl-tRNA synthetase family. Homodimer.

Its subcellular location is the mitochondrion matrix. The enzyme catalyses tRNA(Trp) + L-tryptophan + ATP = L-tryptophyl-tRNA(Trp) + AMP + diphosphate + H(+). The sequence is that of Tryptophan--tRNA ligase, mitochondrial from Schizosaccharomyces pombe (strain 972 / ATCC 24843) (Fission yeast).